The primary structure comprises 277 residues: Ribosomal RNA small subunit methyltransferase A (277 aa).

The S-adenosyl-L-methionine site is built by His-20, Leu-22, Gly-47, Glu-71, Asp-94, and Asn-116.

The protein belongs to the class I-like SAM-binding methyltransferase superfamily. rRNA adenine N(6)-methyltransferase family. RsmA subfamily.

The protein localises to the cytoplasm. The catalysed reaction is adenosine(1518)/adenosine(1519) in 16S rRNA + 4 S-adenosyl-L-methionine = N(6)-dimethyladenosine(1518)/N(6)-dimethyladenosine(1519) in 16S rRNA + 4 S-adenosyl-L-homocysteine + 4 H(+). In terms of biological role, specifically dimethylates two adjacent adenosines (A1518 and A1519) in the loop of a conserved hairpin near the 3'-end of 16S rRNA in the 30S particle. May play a critical role in biogenesis of 30S subunits. This is Ribosomal RNA small subunit methyltransferase A from Burkholderia sp.